Reading from the N-terminus, the 164-residue chain is FMN reductase (NADH) RutF (164 aa).

This sequence belongs to the non-flavoprotein flavin reductase family. RutF subfamily.

It catalyses the reaction FMNH2 + NAD(+) = FMN + NADH + 2 H(+). Catalyzes the reduction of FMN to FMNH2 which is used to reduce pyrimidine by RutA via the Rut pathway. The sequence is that of FMN reductase (NADH) RutF from Escherichia coli O127:H6 (strain E2348/69 / EPEC).